The primary structure comprises 184 residues: Lysozyme 1 (184 aa).

The first 20 residues, 1–20 (MNGLILFCAVVFATAVCTYG), serve as a signal peptide directing secretion. The I-type lysozyme domain maps to 69-184 (TGMVSQQCLR…WRRVQAQGCN (116 aa)). Disulfide bonds link cysteine 76–cysteine 152, cysteine 81–cysteine 87, cysteine 92–cysteine 101, cysteine 114–cysteine 134, cysteine 124–cysteine 130, and cysteine 148–cysteine 166. The active-site Proton donor is the glutamate 84. The Nucleophile role is filled by aspartate 95. 107 to 113 (KRAYWID) serves as a coordination point for substrate. Residues tyrosine 138 and 159–161 (HNG) each bind substrate.

As to expression, hemolymph, labial palps, non-vesiculated cells of mantle connective tissue, cells of interlamellar junctions and epithelia surrounding the water tubes of the gills.

Its subcellular location is the secreted. It catalyses the reaction Hydrolysis of (1-&gt;4)-beta-linkages between N-acetylmuramic acid and N-acetyl-D-glucosamine residues in a peptidoglycan and between N-acetyl-D-glucosamine residues in chitodextrins.. Its function is as follows. Has antibacterial activity against the Gram-positive bacteria L.garvieae, M.luteus and Enterococcus sp., and the Gram-negative bacteria E.coli and V.vulnificus. Weak antibacterial activity against the Gram-negative bacterium A.hydrophila. No antibacterial activity detected against the Gram-positive bacterium S.iniae or against the Gram-negative bacterium E.ictaluri. Shows some chitinase activity but no isopeptidase activity. This Crassostrea virginica (Eastern oyster) protein is Lysozyme 1.